Consider the following 116-residue polypeptide: Aspartate 1-decarboxylase (116 aa).

The active-site Schiff-base intermediate with substrate; via pyruvic acid is Ser-25. Ser-25 is subject to Pyruvic acid (Ser). Thr-57 contributes to the substrate binding site. Tyr-58 serves as the catalytic Proton donor. Residue 73–75 coordinates substrate; the sequence is GPA.

The protein belongs to the PanD family. Heterooctamer of four alpha and four beta subunits. Requires pyruvate as cofactor. In terms of processing, is synthesized initially as an inactive proenzyme, which is activated by self-cleavage at a specific serine bond to produce a beta-subunit with a hydroxyl group at its C-terminus and an alpha-subunit with a pyruvoyl group at its N-terminus.

The protein resides in the cytoplasm. The catalysed reaction is L-aspartate + H(+) = beta-alanine + CO2. It functions in the pathway cofactor biosynthesis; (R)-pantothenate biosynthesis; beta-alanine from L-aspartate: step 1/1. In terms of biological role, catalyzes the pyruvoyl-dependent decarboxylation of aspartate to produce beta-alanine. This chain is Aspartate 1-decarboxylase, found in Flavobacterium psychrophilum (strain ATCC 49511 / DSM 21280 / CIP 103535 / JIP02/86).